The sequence spans 451 residues: Protein SAR DEFICIENT 1 (451 aa).

A DNA-binding region spans residues 149–270; sequence DKWTSDEFES…AFHKKLSSRH (122 aa).

The protein belongs to the plant ACBP60 protein family. (Microbial infection) Interacts with V.dahliae SCP41.

Its subcellular location is the nucleus. Transcription activator that binds DNA in a sequence-specific manner, 5'-GAAATTTTGG-3', to promote the expression of target genes. Recruited to the promoter of ICS1 and other defense-related genes (e.g. PR1 and SID2) in response to both biotic (e.g. Pseudomonas syringae pv. maculicola ES4326) and abiotic stresses (e.g. UV-B), thus triggering slow defense responses by stimulating salicylic acid (SA) biosynthesis. Required for basal and systemic acquired resistance to P.syringae pv. maculicola and Hyaloperonospora arabidopsidis. The chain is Protein SAR DEFICIENT 1 from Arabidopsis thaliana (Mouse-ear cress).